A 194-amino-acid chain; its full sequence is Crossover junction endodeoxyribonuclease RuvC (194 aa).

Catalysis depends on residues Asp8, Glu72, and Asp144. Asp8, Glu72, and Asp144 together coordinate Mg(2+).

This sequence belongs to the RuvC family. In terms of assembly, homodimer which binds Holliday junction (HJ) DNA. The HJ becomes 2-fold symmetrical on binding to RuvC with unstacked arms; it has a different conformation from HJ DNA in complex with RuvA. In the full resolvosome a probable DNA-RuvA(4)-RuvB(12)-RuvC(2) complex forms which resolves the HJ. Mg(2+) is required as a cofactor.

The protein localises to the cytoplasm. The catalysed reaction is Endonucleolytic cleavage at a junction such as a reciprocal single-stranded crossover between two homologous DNA duplexes (Holliday junction).. The RuvA-RuvB-RuvC complex processes Holliday junction (HJ) DNA during genetic recombination and DNA repair. Endonuclease that resolves HJ intermediates. Cleaves cruciform DNA by making single-stranded nicks across the HJ at symmetrical positions within the homologous arms, yielding a 5'-phosphate and a 3'-hydroxyl group; requires a central core of homology in the junction. The consensus cleavage sequence is 5'-(A/T)TT(C/G)-3'. Cleavage occurs on the 3'-side of the TT dinucleotide at the point of strand exchange. HJ branch migration catalyzed by RuvA-RuvB allows RuvC to scan DNA until it finds its consensus sequence, where it cleaves and resolves the cruciform DNA. This Psychrobacter sp. (strain PRwf-1) protein is Crossover junction endodeoxyribonuclease RuvC.